The following is a 208-amino-acid chain: MEWKIESLPVPYDKAMCFMQQRVEGIANKTQDELVWLLEHFPLYTAGTSARSEELLTDSLFPVYSTGRGGKYTYHGPGQRIAYVMMDLKARDKCNVRLYVETLGEWIVKTLKHFSIRSYFNPNLIGVWVNHNGSEKKIAAFGIRIRKWITYHGVSINVFTDLSHYSGIIPCGIKEYGITSLKTLGVNILYEEFDVVLKKEFNKVFCNC.

The BPL/LPL catalytic domain maps to Lys29–Cys208. Substrate is bound by residues Arg68 to His75, Ala140 to Gly142, and Gly153 to Ser155. The Acyl-thioester intermediate role is filled by Cys171.

The protein belongs to the LipB family.

It localises to the cytoplasm. It catalyses the reaction octanoyl-[ACP] + L-lysyl-[protein] = N(6)-octanoyl-L-lysyl-[protein] + holo-[ACP] + H(+). The protein operates within protein modification; protein lipoylation via endogenous pathway; protein N(6)-(lipoyl)lysine from octanoyl-[acyl-carrier-protein]: step 1/2. Catalyzes the transfer of endogenously produced octanoic acid from octanoyl-acyl-carrier-protein onto the lipoyl domains of lipoate-dependent enzymes. Lipoyl-ACP can also act as a substrate although octanoyl-ACP is likely to be the physiological substrate. In Ehrlichia ruminantium (strain Gardel), this protein is Octanoyltransferase.